The primary structure comprises 137 residues: Mandibular organ-inhibiting hormone (137 aa).

The N-terminal stretch at 1 to 26 (MTTKCTVMAVVLAACICLQVLPQAYG) is a signal peptide. Q63 bears the Pyrrolidone carboxylic acid mark. 3 disulfides stabilise this stretch: C69–C105, C85–C101, and C88–C114. The residue at position 134 (V134) is a Valine amide.

It belongs to the arthropod CHH/MIH/GIH/VIH hormone family. In terms of tissue distribution, produced by the medulla terminalis X-organ in the eyestalks and transported to the sinus gland where it is stored and released.

Its subcellular location is the secreted. Its function is as follows. Represses the synthesis of methyl farnesoate, the precursor of insect juvenile hormone III in the mandibular organ. Also has hyperglycemic activity. This is Mandibular organ-inhibiting hormone from Libinia emarginata (Portly spider crab).